A 68-amino-acid chain; its full sequence is UPF0434 protein H16_A0605 (68 aa).

This sequence belongs to the UPF0434 family.

The protein is UPF0434 protein H16_A0605 of Cupriavidus necator (strain ATCC 17699 / DSM 428 / KCTC 22496 / NCIMB 10442 / H16 / Stanier 337) (Ralstonia eutropha).